The primary structure comprises 148 residues: Large ribosomal subunit protein bL9 (148 aa).

Belongs to the bacterial ribosomal protein bL9 family.

Binds to the 23S rRNA. The polypeptide is Large ribosomal subunit protein bL9 (Pseudomonas putida (strain ATCC 700007 / DSM 6899 / JCM 31910 / BCRC 17059 / LMG 24140 / F1)).